Consider the following 37-residue polypeptide: MKVRASVRKMCEKCRTIRRKGRVMVICSNSKHKQRQG.

Belongs to the bacterial ribosomal protein bL36 family.

It localises to the plastid. Its subcellular location is the cyanelle. This Cyanophora paradoxa protein is Large ribosomal subunit protein bL36c (rpl36).